Consider the following 446-residue polypeptide: Glycerol-3-phosphate acyltransferase 3 (446 aa).

3 consecutive transmembrane segments (helical) span residues 11-31 (IFII…MFGS), 146-166 (LRVT…LLPL), and 168-188 (ITLA…VGQL). The HXXXXD motif signature appears at 236-241 (HTSPID).

It belongs to the 1-acyl-sn-glycerol-3-phosphate acyltransferase family.

The protein resides in the endoplasmic reticulum membrane. It carries out the reaction sn-glycerol 3-phosphate + an acyl-CoA = a 1-acyl-sn-glycero-3-phosphate + CoA. It catalyses the reaction a 1-acyl-sn-glycero-3-phosphate + an acyl-CoA = a 1,2-diacyl-sn-glycero-3-phosphate + CoA. The enzyme catalyses dodecanoyl-CoA + sn-glycerol 3-phosphate = 1-dodecanoyl-sn-glycerol 3-phosphate + CoA. The catalysed reaction is sn-glycerol 3-phosphate + hexadecanoyl-CoA = 1-hexadecanoyl-sn-glycero-3-phosphate + CoA. It carries out the reaction sn-glycerol 3-phosphate + (9Z)-octadecenoyl-CoA = 1-(9Z-octadecenoyl)-sn-glycero-3-phosphate + CoA. It catalyses the reaction (9Z,12Z)-octadecadienoyl-CoA + sn-glycerol 3-phosphate = 1-(9Z,12Z)-octadecadienoyl-sn-glycero-3-phosphate + CoA. The enzyme catalyses 1-tetradecanoyl-sn-glycerol 3-phosphate + (9Z)-octadecenoyl-CoA = 1-tetradecanoyl-2-(9Z)-octadecenoyl-sn-glycero-3-phosphate + CoA. The catalysed reaction is 1-hexadecanoyl-sn-glycero-3-phosphate + (9Z)-octadecenoyl-CoA = 1-hexadecanoyl-2-(9Z-octadecenoyl)-sn-glycero-3-phosphate + CoA. It carries out the reaction 1-(9Z-octadecenoyl)-sn-glycero-3-phosphate + (9Z)-octadecenoyl-CoA = 1,2-di-(9Z-octadecenoyl)-sn-glycero-3-phosphate + CoA. It catalyses the reaction 1-(6Z,9Z,12Z-octadecatrienoyl)-sn-glycero-3-phosphate + (9Z)-octadecenoyl-CoA = (6Z,9Z,12Z)-octadecatrienoyl-2-(9Z)-octadecenoyl-sn-glycero-3-phosphate + CoA. The enzyme catalyses 1-(9Z,12Z,15Z)-octadecatrienoyl-sn-glycero-3-phosphate + (9Z)-octadecenoyl-CoA = 1-(9Z,12Z,15Z)-octadecatrienoyl-2-(9Z)-octadecenoyl-sn-glycero-3-phosphate + CoA. The catalysed reaction is 1-(9Z-octadecenoyl)-sn-glycero-3-phosphate + tetradecanoyl-CoA = 1-(9Z)-octadecenoyl-2-tetradecanoyl-sn-glycero-3-phosphate + CoA. It carries out the reaction 1-(9Z-octadecenoyl)-sn-glycero-3-phosphate + hexadecanoyl-CoA = 1-(9Z)-octadecenoyl-2-hexadecanoyl-sn-glycero-3-phosphate + CoA. It catalyses the reaction 1-(9Z-octadecenoyl)-sn-glycero-3-phosphate + octadecanoyl-CoA = 1-(9Z-octadecenoyl)-2-octadecanoyl-sn-glycero-3-phosphate + CoA. The enzyme catalyses 1-(9Z-octadecenoyl)-sn-glycero-3-phosphate + (9Z,12Z)-octadecadienoyl-CoA = 1-(9Z)-octadecenoyl-2-(9Z,12Z)-octadecadienoyl-sn-glycero-3-phosphate + CoA. The catalysed reaction is 1-(5Z,8Z,11Z,14Z-eicosatetraenoyl)-sn-glycero-3-phosphate + (9Z)-octadecenoyl-CoA = 1-(5Z,8Z,11Z,14Z)-eicosatetraenoyl-2-(9Z)-octadecenoyl-sn-glycero-3-phosphate + CoA. It participates in glycerolipid metabolism; triacylglycerol biosynthesis. The protein operates within phospholipid metabolism; CDP-diacylglycerol biosynthesis; CDP-diacylglycerol from sn-glycerol 3-phosphate: step 1/3. Converts glycerol-3-phosphate to 1-acyl-sn-glycerol-3-phosphate (lysophosphatidic acid or LPA) by incorporating an acyl moiety at the sn-1 position of the glycerol backbone. Also converts LPA into 1,2-diacyl-sn-glycerol-3-phosphate (phosphatidic acid or PA) by incorporating an acyl moiety at the sn-2 position of the glycerol backbone. Protects cells against lipotoxicity. The chain is Glycerol-3-phosphate acyltransferase 3 from Xenopus laevis (African clawed frog).